A 398-amino-acid chain; its full sequence is Acetate kinase (398 aa).

Asn-8 is a Mg(2+) binding site. Lys-15 contributes to the ATP binding site. Substrate is bound at residue Arg-89. Asp-146 acts as the Proton donor/acceptor in catalysis. Residues 206–210 (HIGNG), 283–285 (DMR), and 331–335 (GMGEN) each bind ATP. Residue Glu-383 coordinates Mg(2+).

It belongs to the acetokinase family. In terms of assembly, homodimer. It depends on Mg(2+) as a cofactor. Mn(2+) is required as a cofactor.

The protein resides in the cytoplasm. It carries out the reaction acetate + ATP = acetyl phosphate + ADP. It functions in the pathway metabolic intermediate biosynthesis; acetyl-CoA biosynthesis; acetyl-CoA from acetate: step 1/2. Catalyzes the formation of acetyl phosphate from acetate and ATP. Can also catalyze the reverse reaction. The polypeptide is Acetate kinase (Streptococcus pyogenes serotype M1).